Reading from the N-terminus, the 171-residue chain is Ly6/PLAUR domain-containing protein 6 (171 aa).

The N-terminal stretch at 1–25 (MEPSPALAWLLLLSLVADCLKAAQS) is a signal peptide. The region spanning 47-141 (FKCFTCEKAA…PRNETDATFA (95 aa)) is the UPAR/Ly6 domain. Cystine bridges form between Cys49-Cys77, Cys52-Cys61, Cys70-Cys96, Cys102-Cys121, Cys107-Cys118, and Cys122-Cys127. The NxI motif signature appears at 88–90 (NSI). 2 N-linked (GlcNAc...) asparagine glycosylation sites follow: Asn134 and Asn147. A lipid anchor (GPI-anchor amidated asparagine) is attached at Asn147. The propeptide at 148–171 (QTNGHPHCVSVIVSCLWVWLGLTL) is removed in mature form.

As to quaternary structure, interacts with nicotinic acetylcholine receptors (nAChRs) including CHRNA3, CHRNA4, CHRNA5, CHRNA6, CHRNA7, CHRNB2 and CHRNB4. Interacts (via NxI motif) with LRP6. In terms of tissue distribution, detected in the frontal cortex and hippocampus (at protein level). Highly expressed in the brain and spinal cord, as well as dorsal root and trigeminal ganglia.

The protein localises to the secreted. It localises to the cytoplasm. It is found in the cell membrane. The protein resides in the synapse. Its subcellular location is the synaptosome. The protein localises to the membrane raft. It localises to the cell projection. It is found in the dendrite. The protein resides in the perikaryon. Acts as a modulator of nicotinic acetylcholine receptors (nAChRs) function in the brain. Inhibits nicotine-induced Ca(2+) influx through nAChRs. In vitro, specifically inhibits alpha-3:beta-4 and alpha-7 nAChR currents in an allosteric manner. Acts as a positive regulator of Wnt/beta-catenin signaling. This chain is Ly6/PLAUR domain-containing protein 6 (Lypd6), found in Mus musculus (Mouse).